Here is a 645-residue protein sequence, read N- to C-terminus: Acetyl-coenzyme A synthetase (645 aa).

CoA-binding positions include R190–K193, T308, and N332. Residues G384–P386, D408–T413, D497, and R512 each bind ATP. S520 lines the CoA pocket. R523 contacts ATP. Residues V534, H536, and V539 each contribute to the Mg(2+) site. R581 provides a ligand contact to CoA. The residue at position 606 (K606) is an N6-acetyllysine.

This sequence belongs to the ATP-dependent AMP-binding enzyme family. Mg(2+) serves as cofactor. In terms of processing, acetylated. Deacetylation by the SIR2-homolog deacetylase activates the enzyme.

It catalyses the reaction acetate + ATP + CoA = acetyl-CoA + AMP + diphosphate. Functionally, catalyzes the conversion of acetate into acetyl-CoA (AcCoA), an essential intermediate at the junction of anabolic and catabolic pathways. AcsA undergoes a two-step reaction. In the first half reaction, AcsA combines acetate with ATP to form acetyl-adenylate (AcAMP) intermediate. In the second half reaction, it can then transfer the acetyl group from AcAMP to the sulfhydryl group of CoA, forming the product AcCoA. This is Acetyl-coenzyme A synthetase from Bdellovibrio bacteriovorus (strain ATCC 15356 / DSM 50701 / NCIMB 9529 / HD100).